A 407-amino-acid polypeptide reads, in one-letter code: S-adenosylmethionine synthase (407 aa).

His-19 is an ATP binding site. Asp-21 contacts Mg(2+). Glu-47 serves as a coordination point for K(+). L-methionine is bound by residues Glu-60 and Gln-103. Residues 103-113 form a flexible loop region; the sequence is QSQEIADGVDT. The disordered stretch occupies residues 108–131; the sequence is ADGVDTSQEARGDGHFEEDDRAGA. ATP is bound by residues 178–180, Asp-258, 264–265, Ala-281, and Lys-285; these read DGK and RK. L-methionine is bound at residue Asp-258. Position 289 (Lys-289) interacts with L-methionine.

It belongs to the AdoMet synthase family. Homotetramer; dimer of dimers. Requires Mg(2+) as cofactor. It depends on K(+) as a cofactor.

The protein localises to the cytoplasm. It carries out the reaction L-methionine + ATP + H2O = S-adenosyl-L-methionine + phosphate + diphosphate. It participates in amino-acid biosynthesis; S-adenosyl-L-methionine biosynthesis; S-adenosyl-L-methionine from L-methionine: step 1/1. In terms of biological role, catalyzes the formation of S-adenosylmethionine (AdoMet) from methionine and ATP. The overall synthetic reaction is composed of two sequential steps, AdoMet formation and the subsequent tripolyphosphate hydrolysis which occurs prior to release of AdoMet from the enzyme. This Corynebacterium efficiens (strain DSM 44549 / YS-314 / AJ 12310 / JCM 11189 / NBRC 100395) protein is S-adenosylmethionine synthase.